The primary structure comprises 227 residues: Sperm-associated antigen 7 (227 aa).

The tract at residues 1 to 45 (MADLLGSILSSMEKPPSLGDQESRRKAREQAARLKKLQEQDKQQK) is disordered. The residue at position 2 (Ala-2) is an N-acetylalanine. Basic and acidic residues predominate over residues 21 to 45 (QESRRKAREQAARLKKLQEQDKQQK). Positions 35 to 51 (KKLQEQDKQQKVEFRKR) match the Nuclear localization signal motif. The R3H domain maps to 46 to 109 (VEFRKRMEKE…DCRYVMIFKK (64 aa)). A Phosphoserine modification is found at Ser-114. The disordered stretch occupies residues 118–161 (LDSYRHGEEWDPQKAEEKRKLKELAQKQEEEAAQQGPAVVSPAS). Residues 119 to 147 (DSYRHGEEWDPQKAEEKRKLKELAQKQEE) are compositionally biased toward basic and acidic residues. A Nuclear localization signal motif is present at residues 122 to 139 (RHGEEWDPQKAEEKRKLK). Residues Ser-158 and Ser-202 each carry the phosphoserine modification.

It localises to the nucleus. The polypeptide is Sperm-associated antigen 7 (Spag7) (Mus musculus (Mouse)).